Reading from the N-terminus, the 681-residue chain is Transcriptional regulator prz1 (681 aa).

The span at 1–15 (MERQRSEEANRRFKD) shows a compositional bias: basic and acidic residues. Disordered stretches follow at residues 1–29 (MERQ…SKPD), 66–96 (NPSK…DSYP), 340–372 (SHQS…NSPF), 410–433 (PQIN…ANPL), and 520–563 (KIEN…AKSE). Composition is skewed to polar residues over residues 66–86 (NPSK…FKTS) and 340–358 (SHQS…LNSE). Residues 416-428 (PSSPSKSQSGPSL) are compositionally biased toward low complexity. Over residues 528–549 (SNDYLSVRNTRPRSRSLNSLVG) the composition is skewed to polar residues. Phosphoserine occurs at positions 543 and 546. Over residues 550 to 559 (NKSENSSSSK) the composition is skewed to low complexity. 2 C2H2-type zinc fingers span residues 570-594 (YVCT…MNTH) and 600-622 (FQCS…EQLH). Residues 628–650 (FACVTCNQRFARMDALNRHYKSE) form a C2H2-type 3; degenerate zinc finger. The tract at residues 662–681 (RGIQVPPSRKTAVASTSKQK) is disordered.

This sequence belongs to the EGR C2H2-type zinc-finger protein family. Post-translationally, phosphorylated. Dephosphorylated by calcineurin which leads to rapid translocation from the cytoplasm to the nucleus.

It localises to the nucleus. It is found in the cytoplasm. Involved in the regulation of calcium ion homeostasis. Binds to the calcineurin-dependent response element. Transcriptionally regulates pmc1. This chain is Transcriptional regulator prz1 (prz1), found in Schizosaccharomyces pombe (strain 972 / ATCC 24843) (Fission yeast).